The sequence spans 188 residues: Elongation factor P (188 aa).

This sequence belongs to the elongation factor P family.

The protein resides in the cytoplasm. It functions in the pathway protein biosynthesis; polypeptide chain elongation. In terms of biological role, involved in peptide bond synthesis. Stimulates efficient translation and peptide-bond synthesis on native or reconstituted 70S ribosomes in vitro. Probably functions indirectly by altering the affinity of the ribosome for aminoacyl-tRNA, thus increasing their reactivity as acceptors for peptidyl transferase. The polypeptide is Elongation factor P (Nitrobacter hamburgensis (strain DSM 10229 / NCIMB 13809 / X14)).